We begin with the raw amino-acid sequence, 166 residues long: Large ribosomal subunit protein uL11 (166 aa).

Residue Arg67 is modified to N5-methylarginine.

This sequence belongs to the universal ribosomal protein uL11 family.

This is Large ribosomal subunit protein uL11 (RPL12) from Encephalitozoon cuniculi (strain GB-M1) (Microsporidian parasite).